The following is a 311-amino-acid chain: 26S proteasome regulatory subunit RPN11 (311 aa).

The 136-residue stretch at 32–167 (VYISSLALLK…IDAFRLISPA (136 aa)) folds into the MPN domain. Zn(2+) contacts are provided by histidine 114, histidine 116, and aspartate 127. A JAMM motif motif is present at residues 114–127 (HSHPGFGCWLSSVD).

The protein belongs to the peptidase M67A family.

In terms of biological role, acts as a regulatory subunit of the 26 proteasome which is involved in the ATP-dependent degradation of ubiquitinated proteins. The chain is 26S proteasome regulatory subunit RPN11 (RPN11) from Eremothecium gossypii (strain ATCC 10895 / CBS 109.51 / FGSC 9923 / NRRL Y-1056) (Yeast).